The sequence spans 464 residues: Kynureninase (464 aa).

N-acetylmethionine is present on Met-1. Pyridoxal 5'-phosphate contacts are provided by residues Leu-137, Thr-138, 165–168 (FPSD), Ser-221, Asp-250, His-253, and Tyr-275. Lys-276 is modified (N6-(pyridoxal phosphate)lysine). Trp-305 and Asn-333 together coordinate pyridoxal 5'-phosphate.

It belongs to the kynureninase family. Homodimer. The cofactor is pyridoxal 5'-phosphate.

It localises to the cytoplasm. It is found in the cytosol. It carries out the reaction L-kynurenine + H2O = anthranilate + L-alanine + H(+). The enzyme catalyses 3-hydroxy-L-kynurenine + H2O = 3-hydroxyanthranilate + L-alanine + H(+). Its pathway is amino-acid degradation; L-kynurenine degradation; L-alanine and anthranilate from L-kynurenine: step 1/1. It functions in the pathway cofactor biosynthesis; NAD(+) biosynthesis; quinolinate from L-kynurenine: step 2/3. In terms of biological role, catalyzes the cleavage of L-kynurenine (L-Kyn) and L-3-hydroxykynurenine (L-3OHKyn) into anthranilic acid (AA) and 3-hydroxyanthranilic acid (3-OHAA), respectively. Has a preference for the L-3-hydroxy form. Also has cysteine-conjugate-beta-lyase activity. The chain is Kynureninase (Kynu) from Mus musculus (Mouse).